A 384-amino-acid polypeptide reads, in one-letter code: Chaperone protein DnaJ (384 aa).

Residues 5–70 (DYYEVLGVSK…DKKAAYDRYG (66 aa)) enclose the J domain. A disordered region spans residues 16 to 47 (ASSDDIKKGYRRKAKELHPDRNKDDPNAEAQF). Basic and acidic residues predominate over residues 31-47 (ELHPDRNKDDPNAEAQF). A CR-type zinc finger spans residues 143–221 (GLQKTINVPT…CQGAGRVEKD (79 aa)). Zn(2+) contacts are provided by Cys156, Cys159, Cys173, Cys176, Cys195, Cys198, Cys209, and Cys212. 4 CXXCXGXG motif repeats span residues 156 to 163 (CKTCNGSG), 173 to 180 (CPTCSGMG), 195 to 202 (CPTCSGLG), and 209 to 216 (CKSCQGAG).

The protein belongs to the DnaJ family. Homodimer. Zn(2+) serves as cofactor.

It localises to the cytoplasm. Functionally, participates actively in the response to hyperosmotic and heat shock by preventing the aggregation of stress-denatured proteins and by disaggregating proteins, also in an autonomous, DnaK-independent fashion. Unfolded proteins bind initially to DnaJ; upon interaction with the DnaJ-bound protein, DnaK hydrolyzes its bound ATP, resulting in the formation of a stable complex. GrpE releases ADP from DnaK; ATP binding to DnaK triggers the release of the substrate protein, thus completing the reaction cycle. Several rounds of ATP-dependent interactions between DnaJ, DnaK and GrpE are required for fully efficient folding. Also involved, together with DnaK and GrpE, in the DNA replication of plasmids through activation of initiation proteins. This chain is Chaperone protein DnaJ, found in Roseobacter denitrificans (strain ATCC 33942 / OCh 114) (Erythrobacter sp. (strain OCh 114)).